Reading from the N-terminus, the 156-residue chain is Ribosomal RNA large subunit methyltransferase H (156 aa).

S-adenosyl-L-methionine-binding positions include Leu-73, Gly-104, and Leu-123–Leu-128.

This sequence belongs to the RNA methyltransferase RlmH family. In terms of assembly, homodimer.

It localises to the cytoplasm. The enzyme catalyses pseudouridine(1915) in 23S rRNA + S-adenosyl-L-methionine = N(3)-methylpseudouridine(1915) in 23S rRNA + S-adenosyl-L-homocysteine + H(+). Functionally, specifically methylates the pseudouridine at position 1915 (m3Psi1915) in 23S rRNA. The protein is Ribosomal RNA large subunit methyltransferase H of Ralstonia pickettii (strain 12J).